Consider the following 394-residue polypeptide: Potassium channel subfamily K member 3 (394 aa).

Residues 1–8 (MKRQNVRT) lie on the Cytoplasmic side of the membrane. The chain crosses the membrane as a helical span at residues 9 to 29 (LALIVCTFTYLLVGAAVFDAL). Asn-53 is a glycosylation site (N-linked (GlcNAc...) asparagine). Positions 78 to 101 (WRFAGSFYFAITVITTIGYGHAAP) form an intramembrane region, pore-forming. K(+) contacts are provided by Thr-93, Ile-94, Gly-95, and Tyr-96. Positions 93-98 (TIGYGH) are selectivity filter 1. Residues 108–128 (VFCMFYALLGIPLTLVMFQSL) traverse the membrane as a helical segment. Residues 129–158 (GERINTLVRYLLHRAKKGLGMRRADVSMAN) lie on the Cytoplasmic side of the membrane. Residues 159-179 (MVLIGFFSCISTLCIGAAAFS) traverse the membrane as a helical segment. The segment at residues 184 to 207 (WTFFQAYYYCFITLTTIGFGDYVA) is an intramembrane region (pore-forming). K(+) contacts are provided by Thr-199, Ile-200, Gly-201, and Phe-202. The tract at residues 199 to 204 (TIGFGD) is selectivity filter 2. The chain crosses the membrane as a helical span at residues 223–243 (FSFVYILTGLTVIGAFLNLVV). The segment at 243–248 (VLRFMT) is X-gate. Residues 244–394 (LRFMTMNAED…RGLMKRRSSV (151 aa)) lie on the Cytoplasmic side of the membrane. 2 disordered regions span residues 266-286 (RNGQAGGGGGGGSAHTTDTAS) and 338-357 (TCVEQSHSSPGGGGRYSDTP). Gly residues predominate over residues 269–278 (QAGGGGGGGS).

The protein belongs to the two pore domain potassium channel (TC 1.A.1.8) family. Homodimer. Heterodimer with KCNK1. Heterodimer with KCNK9. Widespread expression in adult. Strongest expression in pancreas and placenta. Lower expression in brain, lung, prostate, heart, kidney, uterus, small intestine and colon.

Its subcellular location is the cell membrane. The catalysed reaction is K(+)(in) = K(+)(out). The enzyme catalyses Na(+)(in) = Na(+)(out). With respect to regulation, inhibited by external acidification, diacylglycerol and anandamide. Activated by halothane and isoflurane. Its function is as follows. K(+) channel that conducts voltage-dependent outward rectifying currents upon membrane depolarization. Voltage sensing is coupled to K(+) electrochemical gradient in an 'ion flux gating' mode where outward but not inward ion flow opens the gate. Changes ion selectivity and becomes permeable to Na(+) ions in response to extracellular acidification. Protonation of the pH sensor His-98 stabilizes C-type inactivation conformation likely converting the channel from outward K(+)-conducting, to inward Na(+)-conducting to nonconductive state. Homo- and heterodimerizes to form functional channels with distinct regulatory and gating properties. Allows K(+) currents with fast-gating kinetics important for the repolarization and hyperpolarization phases of action potentials. In cerebellar granule cells, heteromeric KCNK3:KCNK9 channel may hyperpolarize the resting membrane potential to limit intrinsic neuronal excitability, but once the action potential threshold is reached, it may support high-frequency action potential firing and increased neuronal excitability. Dispensable for central chemosensory respiration i.e. breathing controlled by brainstem CO2/pH, it rather conducts pH-sensitive currents and controls the firing rate of serotonergic raphe neurons involved in potentiation of the respiratory chemoreflex. Additionally, imparts chemosensitivity to type 1 cells in carotid bodies which respond to a decrease in arterial oxygen pressure or an increase in carbon dioxide pressure or pH to initiate adaptive changes in pulmonary ventilation. In adrenal gland, contributes to the maintenance of a hyperpolarized resting membrane potential of aldosterone-producing cells at zona glomerulosa and limits aldosterone release as part of a regulatory mechanism that controls arterial blood pressure and electrolyte homeostasis. In brown adipocytes, mediates K(+) efflux that counteracts norepinephrine-induced membrane depolarization, limits Ca(2+) efflux and downstream cAMP and PKA signaling, ultimately attenuating lipid oxidation and adaptive thermogenesis. The protein is Potassium channel subfamily K member 3 of Homo sapiens (Human).